The following is a 176-amino-acid chain: NAD(P)H-quinone oxidoreductase subunit 6, chloroplastic (176 aa).

5 helical membrane-spanning segments follow: residues 10–30 (FLLV…VLFP), 32–52 (PIYS…FYIL), 61–81 (AQLL…VMFL), 105–125 (ISLF…GIIW), and 153–173 (FLPF…AIVI).

Belongs to the complex I subunit 6 family. NDH is composed of at least 16 different subunits, 5 of which are encoded in the nucleus.

The protein localises to the plastid. Its subcellular location is the chloroplast thylakoid membrane. It catalyses the reaction a plastoquinone + NADH + (n+1) H(+)(in) = a plastoquinol + NAD(+) + n H(+)(out). The enzyme catalyses a plastoquinone + NADPH + (n+1) H(+)(in) = a plastoquinol + NADP(+) + n H(+)(out). Functionally, NDH shuttles electrons from NAD(P)H:plastoquinone, via FMN and iron-sulfur (Fe-S) centers, to quinones in the photosynthetic chain and possibly in a chloroplast respiratory chain. The immediate electron acceptor for the enzyme in this species is believed to be plastoquinone. Couples the redox reaction to proton translocation, and thus conserves the redox energy in a proton gradient. This is NAD(P)H-quinone oxidoreductase subunit 6, chloroplastic (ndhG) from Ipomoea purpurea (Common morning glory).